The sequence spans 201 residues: MANSLSVHLVKELREKTGAAIMDCKKALEVSKGDIDEAEKWLRQQGIAKAKKKSERLTPEGVIASYIHAGDKIGVLVEVNCETDFVARTPTFKELAKEVAIQIAAASPRFLSKEDIPKEVLDEERQKIIESLKGQNKEDLDKVVQEKLEKFIVDSCLLEQPFVKDQSITVRDLICQRIAQIGENIVVRRFVRFQLGEEIEN.

Residues 83–86 (TDFV) are involved in Mg(2+) ion dislocation from EF-Tu.

It belongs to the EF-Ts family.

The protein localises to the cytoplasm. In terms of biological role, associates with the EF-Tu.GDP complex and induces the exchange of GDP to GTP. It remains bound to the aminoacyl-tRNA.EF-Tu.GTP complex up to the GTP hydrolysis stage on the ribosome. This chain is Elongation factor Ts, found in Methylacidiphilum infernorum (isolate V4) (Methylokorus infernorum (strain V4)).